We begin with the raw amino-acid sequence, 187 residues long: Ubiquinone biosynthesis protein COQ4 homolog, mitochondrial (187 aa).

Residues H77, D78, H81, and E93 each coordinate Zn(2+).

The protein belongs to the COQ4 family. In terms of assembly, component of a multi-subunit COQ enzyme complex. Zn(2+) is required as a cofactor.

It is found in the mitochondrion inner membrane. The enzyme catalyses a 4-hydroxy-3-methoxy-5-(all-trans-polyprenyl)benzoate + H(+) = a 2-methoxy-6-(all-trans-polyprenyl)phenol + CO2. Its pathway is cofactor biosynthesis; ubiquinone biosynthesis. Its function is as follows. Lyase that catalyzes the C1-decarboxylation of 4-hydroxy-3-methoxy-5-(all-trans-polyprenyl)benzoic acid into 2-methoxy-6-(all-trans-polyprenyl)phenol during ubiquinone biosynthesis. The protein is Ubiquinone biosynthesis protein COQ4 homolog, mitochondrial of Leishmania braziliensis.